A 296-amino-acid chain; its full sequence is Acetylglutamate kinase (296 aa).

Substrate is bound by residues 69 to 70 (GG), arginine 91, and asparagine 193.

It belongs to the acetylglutamate kinase family. ArgB subfamily.

The protein localises to the cytoplasm. The enzyme catalyses N-acetyl-L-glutamate + ATP = N-acetyl-L-glutamyl 5-phosphate + ADP. It functions in the pathway amino-acid biosynthesis; L-arginine biosynthesis; N(2)-acetyl-L-ornithine from L-glutamate: step 2/4. Functionally, catalyzes the ATP-dependent phosphorylation of N-acetyl-L-glutamate. The protein is Acetylglutamate kinase of Delftia acidovorans (strain DSM 14801 / SPH-1).